The following is a 228-amino-acid chain: Caspase recruitment domain-containing protein 19 (228 aa).

C7 and C77 are disulfide-bonded. In terms of domain architecture, CARD spans 8-99; that stretch reads DRLVQDTPFL…PLHSRLPSRH (92 aa). At V113 the chain carries Phosphoserine.

In terms of assembly, associates with BCL10 by CARD-CARD interaction. As to expression, expressed in ovary, testis, placenta, skeletal muscle, kidney, lung, heart and liver (at protein level). Expressed in thymus and brain.

It is found in the nucleus. The protein localises to the endoplasmic reticulum membrane. The protein resides in the mitochondrion membrane. In terms of biological role, plays a role in inhibiting the effects of BCL10-induced activation of NF-kappa-B. May inhibit the phosphorylation of BCL10 in a CARD-dependent manner. The chain is Caspase recruitment domain-containing protein 19 (CARD19) from Homo sapiens (Human).